The sequence spans 811 residues: Probable disease resistance protein At5g04720 (811 aa).

The region spanning 1–147 (MADIIGGEVV…KVDSLNEKLG (147 aa)) is the RPW8 domain. NB-ARC domains follow at residues 180–242 (VGLD…VSQS) and 312–437 (TYDV…NVLV). 207–214 (GMSGSGKT) lines the ATP pocket. 5 LRR repeats span residues 650–674 (FPKL…ICGI), 676–699 (SLNS…SKLK), 700–722 (ALQL…ICEL), 724–746 (RLKY…IGKV), and 748–769 (TLEK…VVLL).

This sequence belongs to the disease resistance NB-LRR family.

Functionally, probable disease resistance protein. The sequence is that of Probable disease resistance protein At5g04720 from Arabidopsis thaliana (Mouse-ear cress).